Consider the following 287-residue polypeptide: Protoheme IX farnesyltransferase (287 aa).

7 helical membrane-spanning segments follow: residues 19–39 (LMVAGATFFGAMLAVPHVTIT), 100–120 (MVLCLAGGLTSLLVGIGIVAV), 134–154 (FALLVGAAAGAMPPVVGWLAV), 162–182 (MLVVVYTLYLLWQIPHFWLHA), 212–232 (VWFHAYAVAVLMVPAFPLLEG), 233–253 (VGMRIMVTLCGIALLFAAMLA), and 267–287 (VLCAVMVVLLIDRLAIPVSLF).

Belongs to the UbiA prenyltransferase family. Protoheme IX farnesyltransferase subfamily.

It is found in the cell inner membrane. The enzyme catalyses heme b + (2E,6E)-farnesyl diphosphate + H2O = Fe(II)-heme o + diphosphate. Its pathway is porphyrin-containing compound metabolism; heme O biosynthesis; heme O from protoheme: step 1/1. Functionally, converts heme B (protoheme IX) to heme O by substitution of the vinyl group on carbon 2 of heme B porphyrin ring with a hydroxyethyl farnesyl side group. This is Protoheme IX farnesyltransferase from Nitratidesulfovibrio vulgaris (strain DP4) (Desulfovibrio vulgaris).